Reading from the N-terminus, the 202-residue chain is Nitrophorin-3 (202 aa).

The N-terminal stretch at 1–23 (MEPYSALLAVTILCLTSTMGVSG) is a signal peptide. Cystine bridges form between Cys25/Cys144 and Cys62/Cys193. His80 lines the heme pocket.

Belongs to the calycin superfamily. Nitrophorin family. In terms of assembly, interacts weakly with host coagulation factor IX (F9) (inactive and activated) in the presence of Ca(2+). In terms of tissue distribution, salivary gland (at protein level).

Its subcellular location is the secreted. In terms of biological role, heme-based protein that deliver nitric oxide gas (NO) to the victim while feeding, resulting in vasodilation and inhibition of platelet aggregation. Reversibly binds nitric oxide (NO). Also binds tightly to histamine, which is released by the host to induce wound healing. Exhibits weak anticoagulant activity. This is Nitrophorin-3 from Rhodnius prolixus (Triatomid bug).